The following is a 471-amino-acid chain: 3-isopropylmalate dehydratase large subunit (471 aa).

The [4Fe-4S] cluster site is built by C351, C414, and C417.

It belongs to the aconitase/IPM isomerase family. LeuC type 1 subfamily. Heterodimer of LeuC and LeuD. [4Fe-4S] cluster serves as cofactor.

The catalysed reaction is (2R,3S)-3-isopropylmalate = (2S)-2-isopropylmalate. The protein operates within amino-acid biosynthesis; L-leucine biosynthesis; L-leucine from 3-methyl-2-oxobutanoate: step 2/4. In terms of biological role, catalyzes the isomerization between 2-isopropylmalate and 3-isopropylmalate, via the formation of 2-isopropylmaleate. The protein is 3-isopropylmalate dehydratase large subunit of Colwellia psychrerythraea (strain 34H / ATCC BAA-681) (Vibrio psychroerythus).